Reading from the N-terminus, the 102-residue chain is MFAIIKTGGKQFRVFEGQEIYVEKLNVEPETTYQFQEVLAVGGSNPVLGTPFVKDAKVTAQVIKHDRAKKIIVFKYKKRKKYRCKQGHRQSYTKLLITKITV.

Belongs to the bacterial ribosomal protein bL21 family. As to quaternary structure, part of the 50S ribosomal subunit. Contacts protein L20.

Functionally, this protein binds to 23S rRNA in the presence of protein L20. In Onion yellows phytoplasma (strain OY-M), this protein is Large ribosomal subunit protein bL21.